The primary structure comprises 337 residues: Peroxisome biogenesis factor 10 (337 aa).

Over 1–24 (MKNDNKLQKEALMRLSQLRFPFAD) the chain is Peroxisomal matrix. Residues 25 to 54 (APSIVQAHQKDEQIQGLLIMKVTELCKLIK) form a helical membrane-spanning segment. Residue serine 55 is a topological domain, cytoplasmic. The chain crosses the membrane as a helical span at residues 56-77 (QLFVNSYPKELSIFAKLLYLLF). The Peroxisomal matrix segment spans residues 78–105 (TTGRRGRTLGEEYVDLTYTNRKGTRLAG). A helical membrane pass occupies residues 106–138 (RLKMIVFAFAYPLCPYFITKLYKKIMKNNKESK). The Cytoplasmic portion of the chain corresponds to 139-145 (IEDTESV). A helical transmembrane segment spans residues 146–166 (AAFCKGLLDFILDVHMTLFYF). Residues 167–202 (KGAFYSISKRIFGMRYVFKHILSKNEANFREEGSQK) are Peroxisomal matrix-facing. Residues 203-222 (YKVLGYILLAQNVMKWYPVL) traverse the membrane as a helical segment. Residues 223 to 337 (TSTLGSWIYG…QPQEILVLRQ (115 aa)) lie on the Cytoplasmic side of the membrane. Zn(2+) is bound by residues cysteine 286, cysteine 289, cysteine 301, histidine 303, cysteine 306, cysteine 309, cysteine 320, and cysteine 323. An RING-type zinc finger spans residues 286–327 (CILCLMNMSDPSCAPCGHLFCWSCLMSWCKERPECPLCRQHC).

Belongs to the pex2/pex10/pex12 family. Component of the PEX2-PEX10-PEX12 retrotranslocation channel, composed of PEX2, PEX10 and PEX12.

It is found in the peroxisome membrane. It catalyses the reaction S-ubiquitinyl-[E2 ubiquitin-conjugating enzyme]-L-cysteine + [acceptor protein]-L-lysine = [E2 ubiquitin-conjugating enzyme]-L-cysteine + N(6)-ubiquitinyl-[acceptor protein]-L-lysine.. The protein operates within protein modification; protein ubiquitination. Its activity is regulated as follows. The E3 ubiquitin-protein ligase activity is stimulated by PEX12. Its function is as follows. E3 ubiquitin-protein ligase component of a retrotranslocation channel required for peroxisome organization by mediating export of the PEX5 receptor from peroxisomes to the cytosol, thereby promoting PEX5 recycling. The retrotranslocation channel is composed of PEX2, PEX10 and PEX12; each subunit contributing transmembrane segments that coassemble into an open channel that specifically allows the passage of PEX5 through the peroxisomal membrane. PEX10 also regulates PEX5 recycling by acting as a E3 ubiquitin-protein ligase. When PEX5 recycling is compromised, PEX10 catalyzes polyubiquitination of PEX5 during its passage through the retrotranslocation channel, leading to its degradation. The protein is Peroxisome biogenesis factor 10 of Saccharomyces cerevisiae (strain ATCC 204508 / S288c) (Baker's yeast).